A 387-amino-acid chain; its full sequence is WD repeat-containing protein 89 (387 aa).

WD repeat units lie at residues 21–65 (KEPT…VLRE), 68–107 (GYPG…EKPV), 112–156 (GYPS…QDLS), 168–208 (THSD…EEDA), 214–254 (NSIS…TDEP), and 319–358 (GHAA…KTFT).

The chain is WD repeat-containing protein 89 (WDR89) from Pongo abelii (Sumatran orangutan).